Reading from the N-terminus, the 1776-residue chain is TOG array regulator of axonemal microtubules protein 1 (1776 aa).

TOG stretches follow at residues 94–311 and 351–595; these read EEET…RRLE and PQEL…MPSS. HEAT repeat units lie at residues 175–212, 214–246, 250–288, 344–383, 389–426, 430–465, 466–503, and 505–542; these read AFSL…RSSG, VLRT…PEDL, LDLT…RLGQ, NLKF…KFNP, ASLV…RLGE, QFLG…MKEV, GPQR…YPSE, and FDLP…SMGS. Disordered stretches follow at residues 655 to 676, 817 to 921, 970 to 1000, and 1062 to 1084; these read KNKL…TSNS, ILPS…RGIN, HSSL…DSPD, and TRLS…GFTR. Polar residues-rich tracts occupy residues 826–836, 845–855, and 871–892; these read PRTSPKHTSPL, DNSISFSNSWP, and LANQ…TAVQ. A compositionally biased stretch (low complexity) spans 988-1000; that stretch reads SGSSSTSDVDSPD. Residues 1259-1481 are TOG 3; the sequence is DIALTEALRL…YIKESVKNLR (223 aa). HEAT repeat units lie at residues 1297–1334 and 1338–1375; these read TKLH…YLKK and QELD…NVTP. The disordered stretch occupies residues 1493-1536; the sequence is ASAKGRRSHPGSVGNTRSSSVSRDAFSSSEREVTEVREVPRKSA. Positions 1509–1520 are enriched in low complexity; the sequence is RSSSVSRDAFSS. Over residues 1521 to 1533 the composition is skewed to basic and acidic residues; sequence SEREVTEVREVPR. Residues 1540 to 1776 form a TOG 4 region; the sequence is SLESAEYIKV…LLDVTVLSEL (237 aa). 3 HEAT repeats span residues 1541-1578, 1582-1619, and 1623-1661; these read LESA…NNQE, GNIV…LLRD, and PIIN…HVDN.

The protein belongs to the Crescerin family. As to quaternary structure, interacts with ARMC9. Interacts with CCDC66, CEP104 and CSPP1.

It localises to the cell projection. It is found in the cilium. Its subcellular location is the cytoplasm. The protein resides in the cytoskeleton. The protein localises to the cilium axoneme. In terms of biological role, involved in ciliogenesis. It is required for appropriate acetylation and polyglutamylation of ciliary microtubules, and regulation of cilium length. Interacts with microtubules and promotes microtubule polymerization via its HEAT repeat domains, especially those in TOG region 2 and 4. This is TOG array regulator of axonemal microtubules protein 1 (Togaram1) from Mus musculus (Mouse).